A 102-amino-acid polypeptide reads, in one-letter code: 10 kDa heat shock protein, mitochondrial (102 aa).

At Ala-2 the chain carries N-acetylalanine. The residue at position 8 (Lys-8) is an N6-acetyllysine. Residue Lys-28 is modified to N6-succinyllysine. Lys-40 bears the N6-acetyllysine; alternate mark. Residues Lys-40, Lys-54, and Lys-56 each carry the N6-malonyllysine; alternate modification. N6-succinyllysine; alternate occurs at positions 40, 54, 56, 66, and 70. Lys-56, Lys-66, and Lys-70 each carry N6-acetyllysine; alternate. Thr-79 carries the phosphothreonine modification. Residues Lys-80 and Lys-86 each carry the N6-acetyllysine; alternate modification. N6-succinyllysine; alternate is present on residues Lys-80 and Lys-86. N6-acetyllysine is present on Lys-99.

It belongs to the GroES chaperonin family. Homoheptamer arranged in a ring structure. 2 heptameric Hsp10 rings interact with a Hsp60 tetradecamer in the structure of a back-to-back double heptameric ring to form the symmetrical football complex.

The protein resides in the mitochondrion matrix. Functionally, co-chaperonin implicated in mitochondrial protein import and macromolecular assembly. Together with Hsp60, facilitates the correct folding of imported proteins. May also prevent misfolding and promote the refolding and proper assembly of unfolded polypeptides generated under stress conditions in the mitochondrial matrix. The functional units of these chaperonins consist of heptameric rings of the large subunit Hsp60, which function as a back-to-back double ring. In a cyclic reaction, Hsp60 ring complexes bind one unfolded substrate protein per ring, followed by the binding of ATP and association with 2 heptameric rings of the co-chaperonin Hsp10. This leads to sequestration of the substrate protein in the inner cavity of Hsp60 where, for a certain period of time, it can fold undisturbed by other cell components. Synchronous hydrolysis of ATP in all Hsp60 subunits results in the dissociation of the chaperonin rings and the release of ADP and the folded substrate protein. The polypeptide is 10 kDa heat shock protein, mitochondrial (HSPE1) (Bos taurus (Bovine)).